The chain runs to 1696 residues: PH domain leucine-rich repeat protein phosphatase 1 (1696 aa).

At methionine 1 the chain carries N-acetylmethionine. Disordered regions lie at residues methionine 1–alanine 97 and leucine 222–glutamate 398. A compositionally biased stretch (low complexity) spans valine 79 to alanine 92. Over residues aspartate 313–serine 325 the composition is skewed to polar residues. Serine 378 carries the phosphoserine modification. A PH domain is found at arginine 499–serine 599. 18 LRR repeats span residues arginine 601 to serine 622, aspartate 624 to arginine 645, lysine 655 to isoleucine 676, threonine 678 to methionine 699, asparagine 701 to methionine 722, glutamine 724 to threonine 746, phenylalanine 836 to asparagine 857, tyrosine 858 to serine 879, lysine 881 to asparagine 902, serine 904 to threonine 925, serine 926 to lysine 947, serine 950 to glutamate 971, isoleucine 976 to threonine 996, arginine 1000 to lysine 1021, glutamate 1024 to cysteine 1045, arginine 1047 to proline 1068, glutamate 1069 to proline 1090, and lysine 1092 to leucine 1113. Residues serine 1138–leucine 1385 enclose the PPM-type phosphatase domain. Mn(2+)-binding residues include aspartate 1173, glycine 1174, lysine 1337, and aspartate 1376. Disordered regions lie at residues arginine 1422–tyrosine 1473 and lysine 1610–leucine 1696. Low complexity-rich tracts occupy residues serine 1431–glutamate 1452, glutamine 1647–glutamine 1660, and glutamine 1670–glutamine 1680. A PDZ-binding motif is present at residues threonine 1694–leucine 1696.

Interacts with the nucleotide free form of K-Ras (KRAS) via its LRR repeats. Interacts with AKT2, AKT3 and PRKCB isoform beta-II. Interacts with WDR48 and USP12. Mn(2+) is required as a cofactor. In terms of tissue distribution, mainly present in brain (at protein level). Isoform 2 is more abundant in adult brain neurons than isoform 1 in. Isoforms 1 and 2 are expressed in the retina but not found in rod outer segments.

It is found in the cytoplasm. The protein resides in the membrane. It localises to the cell membrane. Its subcellular location is the nucleus. The protein localises to the nucleoplasm. It is found in the nucleus membrane. It catalyses the reaction O-phospho-L-seryl-[protein] + H2O = L-seryl-[protein] + phosphate. The enzyme catalyses O-phospho-L-threonyl-[protein] + H2O = L-threonyl-[protein] + phosphate. Insensitive to okadaic acid. Deubiquitination by WDR48-USP12 complex positively regulates PHLPP1 stability. Functionally, protein phosphatase involved in regulation of Akt and PKC signaling. Mediates dephosphorylation in the C-terminal domain hydrophobic motif of members of the AGC Ser/Thr protein kinase family; specifically acts on 'Ser-473' of AKT2 and AKT3, 'Ser-660' of PRKCB and 'Ser-657' of PRKCA. Isoform 2 seems to have a major role in regulating Akt signaling in hippocampal neurons while isoform 1 may promote Akt and PKC activation and inhibit ERK signaling. Akt regulates the balance between cell survival and apoptosis through a cascade that primarily alters the function of transcription factors that regulate pro- and antiapoptotic genes. Dephosphorylation of 'Ser-473' of Akt triggers apoptosis and suppression of tumor growth. Dephosphorylation of PRKCA and PRKCB leads to their destabilization and degradation. Dephosphorylates STK4 on 'Thr-387' leading to STK4 activation and apoptosis. Dephosphorylates RPS6KB1 and is involved in regulation of cap-dependent translation. Inhibits cancer cell proliferation and may act as a tumor suppressor. Dephosphorylates RAF1 inhibiting its kinase activity. May act as a negative regulator of K-Ras signaling in membrane rafts. Involved in the hippocampus-dependent long-term memory formation. Involved in circadian control by regulating the consolidation of circadian periodicity after resetting. Involved in development and function of regulatory T-cells. The chain is PH domain leucine-rich repeat protein phosphatase 1 (Phlpp1) from Rattus norvegicus (Rat).